The following is a 383-amino-acid chain: MFVYYCKECFIMNKQQSKVRYSIRKVSIGILSISIGMFLALGMSNKAYADEIDKSKDFTRGYEQNVFAKSELNANKNTTKDKIKNEGAVKTSDTSLKLDNKSAISNGNEINQDIKISNTPKNSSQGNNLVINNNEPTKEIKIANLEAQNSNQKKTNKVTNNYFGYYSFREAPKTQIYTVKKGDTLSAIALKYKTTVSNIQNTNNIANPNLIFIGQKLKVPMTPLVEPKPKTVSSNNKSNSNSSTLNYLKTLENRGWDFDGSYGWQCFDLVNVYWNHLYGHGLKGYGAKDIPYANNFNSEAKIYHNTPTFKAEPGDLVVFSGRFGGGYGHTAIVLNGDYDGKLMKFQSLDQNWNNGGWRKAEVAHKVVHNYENDMIFIRPFKKA.

Residues 1–49 (MFVYYCKECFIMNKQQSKVRYSIRKVSIGILSISIGMFLALGMSNKAYA) form the signal peptide. The 45-residue stretch at 175–219 (QIYTVKKGDTLSAIALKYKTTVSNIQNTNNIANPNLIFIGQKLKV) folds into the LysM domain. A Peptidase C51 domain is found at 241-378 (NSSTLNYLKT…NYENDMIFIR (138 aa)).

The protein localises to the secreted. Probably involved in peptidoglycan hydrolysis. This chain is Probable cell wall hydrolase LytN (lytN), found in Staphylococcus aureus (strain MSSA476).